The chain runs to 659 residues: Centrosomal protein of 76 kDa (659 aa).

2 positions are modified to phosphoserine: Ser75 and Ser83.

It belongs to the CEP76 family. In terms of assembly, interacts with CCP110 and CEP97.

The protein resides in the cytoplasm. It is found in the cytoskeleton. Its subcellular location is the microtubule organizing center. The protein localises to the centrosome. It localises to the centriole. In terms of biological role, centrosomal protein involved in regulation of centriole duplication. Required to limit centriole duplication to once per cell cycle by preventing centriole reduplication. The polypeptide is Centrosomal protein of 76 kDa (CEP76) (Homo sapiens (Human)).